The primary structure comprises 210 residues: Tetraspanin-31 (210 aa).

The Cytoplasmic portion of the chain corresponds to 1–12 (MVCGGFACSKNA). Residues 13 to 33 (LCALNVVYMLVSLLLIGVAAW) traverse the membrane as a helical segment. The Extracellular segment spans residues 34 to 44 (GKGLGLVSSIH). Residues 45–65 (IIGGVIAVGVFLLLIAVAGLV) traverse the membrane as a helical segment. The Cytoplasmic segment spans residues 66 to 72 (GAVNHHQ). A helical membrane pass occupies residues 73 to 93 (VLLFFYMIILGLVFIFQFVIS). Residues 94 to 173 (CSCLAINRSK…FLKHSDEALK (80 aa)) are Extracellular-facing. Asparagine 100, asparagine 109, asparagine 117, and asparagine 134 each carry an N-linked (GlcNAc...) asparagine glycan. Residues 174-194 (ILGGVGLFFSFTEILGVWLAM) traverse the membrane as a helical segment. The Cytoplasmic segment spans residues 195 to 210 (RFRNQKDPRANPSAFL).

Belongs to the tetraspanin (TM4SF) family.

It localises to the membrane. This Homo sapiens (Human) protein is Tetraspanin-31 (TSPAN31).